The sequence spans 542 residues: Chaperonin GroEL (542 aa).

ATP is bound by residues Thr-29–Pro-32, Asp-86–Thr-90, Gly-414, and Asp-491.

This sequence belongs to the chaperonin (HSP60) family. In terms of assembly, forms a cylinder of 14 subunits composed of two heptameric rings stacked back-to-back. Interacts with the co-chaperonin GroES.

It localises to the cytoplasm. It carries out the reaction ATP + H2O + a folded polypeptide = ADP + phosphate + an unfolded polypeptide.. Functionally, together with its co-chaperonin GroES, plays an essential role in assisting protein folding. The GroEL-GroES system forms a nano-cage that allows encapsulation of the non-native substrate proteins and provides a physical environment optimized to promote and accelerate protein folding. This chain is Chaperonin GroEL, found in Desulforamulus reducens (strain ATCC BAA-1160 / DSM 100696 / MI-1) (Desulfotomaculum reducens).